The primary structure comprises 241 residues: Putative CRISPR-associated endoribonuclease-like protein Cas6 (241 aa).

This sequence belongs to the CRISPR-associated protein Cas6/Cse3/CasE family. As to quaternary structure, binds crRNA.

CRISPR (clustered regularly interspaced short palindromic repeat), is an adaptive immune system that provides protection against mobile genetic elements (viruses, transposable elements and conjugative plasmids). CRISPR clusters contain sequences complementary to antecedent mobile elements and target invading nucleic acids. CRISPR clusters are transcribed and processed into CRISPR RNA (crRNA), also called psiRNA (prokaryotic silencing) in this organism (Potential). The sequence is that of Putative CRISPR-associated endoribonuclease-like protein Cas6 (cas6b) from Pyrococcus furiosus (strain ATCC 43587 / DSM 3638 / JCM 8422 / Vc1).